The following is a 295-amino-acid chain: Protoheme IX farnesyltransferase (295 aa).

9 helical membrane-spanning segments follow: residues 24–43 (IMYL…PGSI), 47–69 (LALI…NMWY), 94–114 (SALE…AIAV), 117–137 (ISAI…TIWL), 144–164 (NIVI…AVVT), 171–191 (GFVL…ALSL), 216–236 (KYIL…ALFL), 241–261 (FYLG…VSIM), and 272–292 (MFSY…LCSI).

This sequence belongs to the UbiA prenyltransferase family. Protoheme IX farnesyltransferase subfamily.

It is found in the cell membrane. The catalysed reaction is heme b + (2E,6E)-farnesyl diphosphate + H2O = Fe(II)-heme o + diphosphate. It participates in porphyrin-containing compound metabolism; heme O biosynthesis; heme O from protoheme: step 1/1. Functionally, converts heme B (protoheme IX) to heme O by substitution of the vinyl group on carbon 2 of heme B porphyrin ring with a hydroxyethyl farnesyl side group. The sequence is that of Protoheme IX farnesyltransferase from Wolbachia sp. subsp. Brugia malayi (strain TRS).